Reading from the N-terminus, the 460-residue chain is Argininosuccinate lyase (460 aa).

The protein belongs to the lyase 1 family. Argininosuccinate lyase subfamily.

Its subcellular location is the cytoplasm. The enzyme catalyses 2-(N(omega)-L-arginino)succinate = fumarate + L-arginine. The protein operates within amino-acid biosynthesis; L-arginine biosynthesis; L-arginine from L-ornithine and carbamoyl phosphate: step 3/3. The protein is Argininosuccinate lyase of Edwardsiella ictaluri (strain 93-146).